Reading from the N-terminus, the 316-residue chain is Probable cobalamin biosynthesis protein CobD (316 aa).

5 helical membrane-spanning segments follow: residues 1–21, 50–70, 89–109, 165–185, and 294–314; these read MITEIFPFSVLILALLIDIVL, ISGMIISVLVISGAVLAGFAL, ILALIISSYLLKSTFAFKSLI, PLFYYVLFSCAGLGVEAALAF, and ISLIGRAMVLAALLSALLLIL.

Belongs to the CobD/CbiB family.

It is found in the cell membrane. It participates in cofactor biosynthesis; adenosylcobalamin biosynthesis. Converts cobyric acid to cobinamide by the addition of aminopropanol on the F carboxylic group. The polypeptide is Probable cobalamin biosynthesis protein CobD (Methanothrix thermoacetophila (strain DSM 6194 / JCM 14653 / NBRC 101360 / PT) (Methanosaeta thermophila)).